A 54-amino-acid polypeptide reads, in one-letter code: Potassium channel toxin alpha-KTx 14.5 (54 aa).

The N-terminal stretch at M1–G23 is a signal peptide. 3 cysteine pairs are disulfide-bonded: C30–C46, C36–C51, and C40–C53.

This sequence belongs to the short scorpion toxin superfamily. Potassium channel inhibitor family. Alpha-KTx 14 subfamily. In terms of tissue distribution, expressed by the venom gland.

The protein localises to the secreted. Its function is as follows. Inhibits potassium channels. May be active towards small conductance calcium-activated potassium channels (KCNN, SK), and less active towards voltage-gated potassium channels (Kv/KCN). The polypeptide is Potassium channel toxin alpha-KTx 14.5 (Mesobuthus gibbosus (Mediterranean checkered scorpion)).